The sequence spans 757 residues: Protein aardvark (757 aa).

3 disordered regions span residues 39–63 (SSIN…DSNN), 122–166 (LEEN…SSIL), and 256–285 (SSNG…IESS). A coiled-coil region spans residues 121–205 (ILEENNNNNN…FNQFNFLEGI (85 aa)). Composition is skewed to low complexity over residues 125-164 (NNNN…SSSS) and 256-270 (SSNG…NNNN). The F-box domain maps to 310 to 356 (QFDIFLIPTEMLVHLLSFLSANDLWRISLTCKRIWYIVDVFKFWELL). ARM repeat units follow at residues 454 to 498 (GGIS…SNDN), 506 to 548 (GGIQ…VAIE), 549 to 591 (GGIQ…SAKE), 592 to 634 (GGIG…ISRQ), 635 to 678 (NGIQ…IARE), and 679 to 723 (GGIN…RSGG).

It belongs to the beta-catenin family.

The protein localises to the cytoplasm. It localises to the cell junction. In terms of biological role, required to regulate pattern formation during multi-cellular stages of development and for the formation of adherens junctions. Plays a structural role during the regulation of stalk formation. Involved in cell signaling. Required for spore-cell differentiation. Overexpression increases number and size of cell junctions and reduces spore-cell formation. The sequence is that of Protein aardvark (aarA) from Dictyostelium discoideum (Social amoeba).